Consider the following 424-residue polypeptide: UDP-N-acetylglucosamine 1-carboxyvinyltransferase (424 aa).

22-23 (KN) provides a ligand contact to phosphoenolpyruvate. A UDP-N-acetyl-alpha-D-glucosamine-binding site is contributed by arginine 93. Cysteine 117 acts as the Proton donor in catalysis. Cysteine 117 bears the 2-(S-cysteinyl)pyruvic acid O-phosphothioketal mark. Residues 122–126 (RPVDL), 162–165 (KVSV), aspartate 307, and isoleucine 329 each bind UDP-N-acetyl-alpha-D-glucosamine.

This sequence belongs to the EPSP synthase family. MurA subfamily.

The protein resides in the cytoplasm. The catalysed reaction is phosphoenolpyruvate + UDP-N-acetyl-alpha-D-glucosamine = UDP-N-acetyl-3-O-(1-carboxyvinyl)-alpha-D-glucosamine + phosphate. It functions in the pathway cell wall biogenesis; peptidoglycan biosynthesis. Cell wall formation. Adds enolpyruvyl to UDP-N-acetylglucosamine. This Haemophilus influenzae (strain 86-028NP) protein is UDP-N-acetylglucosamine 1-carboxyvinyltransferase.